The primary structure comprises 517 residues: Bifunctional purine biosynthesis protein PurH (517 aa).

One can recognise an MGS-like domain in the interval 1-146 (MAPIALLSVS…KNHAHVAVLT (146 aa)).

This sequence belongs to the PurH family.

The catalysed reaction is (6R)-10-formyltetrahydrofolate + 5-amino-1-(5-phospho-beta-D-ribosyl)imidazole-4-carboxamide = 5-formamido-1-(5-phospho-D-ribosyl)imidazole-4-carboxamide + (6S)-5,6,7,8-tetrahydrofolate. It carries out the reaction IMP + H2O = 5-formamido-1-(5-phospho-D-ribosyl)imidazole-4-carboxamide. The protein operates within purine metabolism; IMP biosynthesis via de novo pathway; 5-formamido-1-(5-phospho-D-ribosyl)imidazole-4-carboxamide from 5-amino-1-(5-phospho-D-ribosyl)imidazole-4-carboxamide (10-formyl THF route): step 1/1. It functions in the pathway purine metabolism; IMP biosynthesis via de novo pathway; IMP from 5-formamido-1-(5-phospho-D-ribosyl)imidazole-4-carboxamide: step 1/1. This chain is Bifunctional purine biosynthesis protein PurH, found in Prochlorococcus marinus (strain MIT 9303).